We begin with the raw amino-acid sequence, 73 residues long: Protein F9 homolog (73 aa).

The Virion surface segment spans residues 1–34; that stretch reads GHAAANCALARVATALTRRVPASRHGLAEGGTPP. Residues 35–55 traverse the membrane as a helical segment; that stretch reads WTLLLAVAAVTVLGVVAVSLL. The Intravirion portion of the chain corresponds to 56 to 73; it reads RRALRVRYRFARPAALRA.

This sequence belongs to the chordopoxvirinae L1 protein family.

It localises to the virion membrane. The sequence is that of Protein F9 homolog from Capra hircus (Goat).